A 564-amino-acid chain; its full sequence is Ferric reductase transmembrane component 1 (564 aa).

N4 carries N-linked (GlcNAc...) asparagine glycosylation. Transmembrane regions (helical) follow at residues 10-30 and 73-93; these read TVIA…MFWL and VILT…FIGM. N111 carries an N-linked (GlcNAc...) asparagine glycan. A helical membrane pass occupies residues 117-137; sequence VAARLGFLACGLYVTSYFFSI. A Ferric oxidoreductase domain is found at 121–254; the sequence is LGFLACGLYV…VYMKVCVAVY (134 aa). Heme contacts are provided by H157 and H171. The next 2 helical transmembrane spans lie at 160–180 and 193–213; these read LSQY…GLAA and IIGY…LPFF. Positions 225 and 239 each coordinate heme. The 156-residue stretch at 255–410 folds into the FAD-binding FR-type domain; it reads VFDRGCRMLR…DGPYGPVSNP (156 aa). N268 carries N-linked (GlcNAc...) asparagine glycosylation. 317-323 contacts FAD; it reads HPFTIAS. An N-linked (GlcNAc...) asparagine glycan is attached at N360. 3 positions are modified to phosphoserine: S362, S381, and S383. Residues 417 to 437 form a helical membrane-spanning segment; sequence LFLFAGGVGVSYILPIILDTI. NAD(+) is bound at residue 419–427; that stretch reads LFAGGVGVS. An N-linked (GlcNAc...) asparagine glycan is attached at N501.

Belongs to the ferric reductase (FRE) family. The cofactor is FAD. Requires heme as cofactor.

It is found in the cell membrane. It catalyses the reaction 2 a Fe(II)-siderophore + NADP(+) + H(+) = 2 a Fe(III)-siderophore + NADPH. Functionally, metalloreductase responsible for reducing extracellular iron and copper prior to import. Catalyzes the reductive uptake of Fe(3+)-salts and Fe(3+) bound to catecholate or hydroxamate siderophores. Fe(3+) is reduced to Fe(2+), which then dissociates from the siderophore and can be imported by the high-affinity Fe(2+) transport complex in the plasma membrane. Also participates in Cu(2+) reduction and Cu(+) uptake. In Schizosaccharomyces pombe (strain 972 / ATCC 24843) (Fission yeast), this protein is Ferric reductase transmembrane component 1 (frp1).